Reading from the N-terminus, the 179-residue chain is Large ribosomal subunit protein uL6 (179 aa).

Belongs to the universal ribosomal protein uL6 family. Part of the 50S ribosomal subunit.

Its function is as follows. This protein binds to the 23S rRNA, and is important in its secondary structure. It is located near the subunit interface in the base of the L7/L12 stalk, and near the tRNA binding site of the peptidyltransferase center. The chain is Large ribosomal subunit protein uL6 from Geobacter sulfurreducens (strain ATCC 51573 / DSM 12127 / PCA).